The following is an 81-amino-acid chain: Protein Vpu (81 aa).

Topologically, residues 1 to 7 (MQPLVIA) are extracellular. Residues 8–28 (AIVALVVAGIIAIVVWSIVFI) form a helical membrane-spanning segment. The Cytoplasmic portion of the chain corresponds to 29–81 (EYRKIRRQRKIDKLIDRISERAEDSGNESEGDQEELSALVGMGHDAPWVINDL). 2 positions are modified to phosphoserine; by host CK2: S53 and S57.

The protein belongs to the HIV-1 VPU protein family. Homopentamer. Interacts with host CD4 and BRTC; these interactions induce proteasomal degradation of CD4. Interacts with host BST2; this interaction leads to the degradation of host BST2. Interacts with host FBXW11. Interacts with host AP1M1; this interaction plays a role in the mistrafficking and subsequent degradation of host BST2. Interacts with host RANBP2; this interaction allows Vpu to down-regulate host BLM sumoylation. Post-translationally, phosphorylated by host CK2. This phosphorylation is necessary for interaction with human BTRC and degradation of CD4.

Its subcellular location is the host membrane. Ion channel activity is inhibited by hexamethylene amiloride in vitro. Enhances virion budding by targeting host CD4 and Tetherin/BST2 to proteasome degradation. Degradation of CD4 prevents any unwanted premature interactions between viral Env and its host receptor CD4 in the endoplasmic reticulum. Degradation of antiretroviral protein Tetherin/BST2 is important for virion budding, as BST2 tethers new viral particles to the host cell membrane. Mechanistically, Vpu bridges either CD4 or BST2 to BTRC, a substrate recognition subunit of the Skp1/Cullin/F-box protein E3 ubiquitin ligase, induces their ubiquitination and subsequent proteasomal degradation. The alteration of the E3 ligase specificity by Vpu seems to promote the degradation of host IKBKB, leading to NF-kappa-B down-regulation and subsequent apoptosis. Acts as a viroporin that forms an oligomeric ion channel in membranes. Modulates the host DNA repair mechanisms to promote degradation of nuclear viral cDNA in cells that are already productively infected in order to suppress immune sensing and proviral hyper-integration (superinfection). Manipulates PML-NBs and modulates SUMOylation of host BLM protein thereby enhancing its DNA-end processing activity toward viral unintegrated linear DNA. Also inhibits RAD52-mediated homologous repair of viral cDNA, preventing the generation of dead-end circular forms of single copies of the long terminal repeat and permitting sustained nucleolytic attack. This Homo sapiens (Human) protein is Protein Vpu.